A 546-amino-acid chain; its full sequence is Thermolysin (546 aa).

Positions Met1–Ala25 are cleaved as a signal peptide. The propeptide at Lys26–Val228 is activation peptide. Asp287, Asp289, Gln291, and Asp368 together coordinate Ca(2+). Zn(2+) is bound at residue His372. Glu373 is a catalytic residue. Zn(2+) contacts are provided by His376 and Glu396. Ca(2+) is bound by residues Glu407, Asn413, Asp415, Glu417, Glu420, Tyr423, Thr424, Ile427, and Asp430. His461 functions as the Proton donor in the catalytic mechanism.

It belongs to the peptidase M4 family. The cofactor is Ca(2+). It depends on Zn(2+) as a cofactor.

The protein resides in the secreted. The catalysed reaction is Preferential cleavage: Xaa-|-Leu &gt; Xaa-|-Phe.. Extracellular zinc metalloprotease. The polypeptide is Thermolysin (Alicyclobacillus acidocaldarius subsp. acidocaldarius (Bacillus acidocaldarius)).